The sequence spans 397 residues: DNA-directed RNA polymerase subunit Rpo1C (397 aa).

This sequence belongs to the RNA polymerase beta' chain family. As to quaternary structure, part of the RNA polymerase complex.

The protein localises to the cytoplasm. The enzyme catalyses RNA(n) + a ribonucleoside 5'-triphosphate = RNA(n+1) + diphosphate. DNA-dependent RNA polymerase (RNAP) catalyzes the transcription of DNA into RNA using the four ribonucleoside triphosphates as substrates. Forms part of the jaw domain. The polypeptide is DNA-directed RNA polymerase subunit Rpo1C (Methanococcus aeolicus (strain ATCC BAA-1280 / DSM 17508 / OCM 812 / Nankai-3)).